A 1223-amino-acid polypeptide reads, in one-letter code: RNA-binding protein 20 (1223 aa).

3 disordered regions span residues 1-59, 238-288, and 306-381; these read MVLA…QAGL, QAYG…PTSQ, and GEVG…GARR. Positions 29–57 are enriched in pro residues; it reads APAPPAPPGPRGMQPPPPPPPPPPPPPQA. Polar residues-rich tracts occupy residues 238–261 and 314–331; these read QAYG…SGSV and GPNS…QSKP. The segment at 410–444 adopts a U1-type zinc-finger fold; the sequence is HLPHICSICDKKVFDLKDWELHVKGKLHAQKCLLF. In terms of domain architecture, RRM spans 520–595; sequence RVVHICNLPE…EKLLIRMSKR (76 aa). Basic and acidic residues predominate over residues 626 to 636; sequence EADRYGPERPR. Disordered regions lie at residues 626 to 902, 971 to 995, and 1042 to 1102; these read EADR…TNME, EISL…DVEM, and MSSP…STQE. An RS region spans residues 630-657; the sequence is YGPERPRSRSPVSRSLSPRSHTPSFTSC. 6 positions are modified to phosphoserine: Ser-637, Ser-639, Ser-642, Ser-644, Ser-662, and Ser-681. Over residues 638–662 the composition is skewed to low complexity; the sequence is RSPVSRSLSPRSHTPSFTSCSSSHS. Composition is skewed to basic and acidic residues over residues 676-711 and 718-737; these read DSWE…MWAH and RQVD…GYRE. Over residues 742 to 752 the composition is skewed to low complexity; that stretch reads SGSPSSLHSVS. Ser-744 is subject to Phosphoserine. Composition is skewed to basic and acidic residues over residues 755–774 and 786–852; these read KSRE…DKYL and RKDE…KEEQ. Phosphoserine is present on residues Ser-803, Ser-861, Ser-872, Ser-887, Ser-889, Ser-973, Ser-976, and Ser-1044. Over residues 864-884 the composition is skewed to basic and acidic residues; sequence RQEKETESSDAENTRTRKEQD. Polar residues predominate over residues 1083–1102; that stretch reads STPTETDLQSQACQGVSTQE. A phosphoserine mark is found at Ser-1111 and Ser-1116. The Matrin-type zinc-finger motif lies at 1157–1188; the sequence is FYCKLCGLFYTSEEMAKMSHCRSAVHYRNLQK. A disordered region spans residues 1197–1223; it reads GLKETEGAGSPRPEDSGIVPHFERKKL. Position 1206 is a phosphoserine (Ser-1206).

Associates with components of the U1 and U2 U1 small nuclear ribonucleoprotein complexes. In terms of processing, phosphorylation regulates the subcellular localization. Phosphorylation of Ser-637 and Ser-639 in the RS (arginine/serine-rich) region promotes nuclear localization of the protein. In contrast, phosphorylation of the C-terminal disordered region promotes localization to cytoplasmic ribonucleoprotein granules.

It localises to the nucleus. The protein resides in the cytoplasm. It is found in the cytoplasmic ribonucleoprotein granule. Functionally, RNA-binding protein that acts as a regulator of mRNA splicing of a subset of genes encoding key structural proteins involved in cardiac development, such as TTN (Titin), CACNA1C, CAMK2D or PDLIM5/ENH. Acts as a repressor of mRNA splicing: specifically binds the 5'UCUU-3' motif that is predominantly found within intronic sequences of pre-mRNAs, leading to the exclusion of specific exons in target transcripts. RBM20-mediated exon skipping is hormone-dependent and is essential for TTN isoform transition in both cardiac and skeletal muscles. RBM20-mediated exon skipping of TTN provides substrates for the formation of circular RNA (circRNAs) from the TTN transcripts. Together with RBM24, promotes the expression of short isoforms of PDLIM5/ENH in cardiomyocytes. The chain is RNA-binding protein 20 from Sus scrofa (Pig).